The sequence spans 802 residues: Bifunctional purine biosynthetic protein ADE5,7 (802 aa).

A GARS region spans residues 1 to 450; the sequence is MLNILVLGNG…QNSESSKVAI (450 aa). The ATP-grasp domain maps to 114-330; the sequence is KRFMSKHNIP…LAQVFLAAAE (217 aa). 141–203 contributes to the ATP binding site; it reads QAHTDKAFVI…EQFLEGDEIS (63 aa). Mg(2+) is bound by residues E298 and N300. An AIRS region spans residues 451-802; it reads TYADSGVSVD…CVIENGTKLY (352 aa). Residues S455 and S458 each carry the phosphoserine modification.

The protein in the N-terminal section; belongs to the GARS family. In the C-terminal section; belongs to the AIR synthase family. Mg(2+) is required as a cofactor. It depends on Mn(2+) as a cofactor.

The protein resides in the cytoplasm. The catalysed reaction is 5-phospho-beta-D-ribosylamine + glycine + ATP = N(1)-(5-phospho-beta-D-ribosyl)glycinamide + ADP + phosphate + H(+). It carries out the reaction 2-formamido-N(1)-(5-O-phospho-beta-D-ribosyl)acetamidine + ATP = 5-amino-1-(5-phospho-beta-D-ribosyl)imidazole + ADP + phosphate + H(+). It functions in the pathway purine metabolism; IMP biosynthesis via de novo pathway; 5-amino-1-(5-phospho-D-ribosyl)imidazole from N(2)-formyl-N(1)-(5-phospho-D-ribosyl)glycinamide: step 2/2. Its pathway is purine metabolism; IMP biosynthesis via de novo pathway; N(1)-(5-phospho-D-ribosyl)glycinamide from 5-phospho-alpha-D-ribose 1-diphosphate: step 2/2. Catalyzes the second and fifth step in the 'de novo' purine biosynthesis pathway; contains phosphoribosylamine--glycine ligase (GARS) and phosphoribosylformylglycinamidine cyclo-ligase (AIRS) activities. This chain is Bifunctional purine biosynthetic protein ADE5,7, found in Saccharomyces cerevisiae (strain ATCC 204508 / S288c) (Baker's yeast).